The following is a 160-amino-acid chain: Cyclic pyranopterin monophosphate synthase (160 aa).

Residues 76–78 (LCH) and 114–115 (ME) contribute to the substrate site. Residue Asp129 is part of the active site.

It belongs to the MoaC family. In terms of assembly, homohexamer; trimer of dimers.

It carries out the reaction (8S)-3',8-cyclo-7,8-dihydroguanosine 5'-triphosphate = cyclic pyranopterin phosphate + diphosphate. It functions in the pathway cofactor biosynthesis; molybdopterin biosynthesis. In terms of biological role, catalyzes the conversion of (8S)-3',8-cyclo-7,8-dihydroguanosine 5'-triphosphate to cyclic pyranopterin monophosphate (cPMP). The sequence is that of Cyclic pyranopterin monophosphate synthase from Mesorhizobium japonicum (strain LMG 29417 / CECT 9101 / MAFF 303099) (Mesorhizobium loti (strain MAFF 303099)).